The chain runs to 142 residues: Large ribosomal subunit protein uL13 (142 aa).

Belongs to the universal ribosomal protein uL13 family. In terms of assembly, part of the 50S ribosomal subunit.

In terms of biological role, this protein is one of the early assembly proteins of the 50S ribosomal subunit, although it is not seen to bind rRNA by itself. It is important during the early stages of 50S assembly. The sequence is that of Large ribosomal subunit protein uL13 from Xanthomonas campestris pv. campestris (strain ATCC 33913 / DSM 3586 / NCPPB 528 / LMG 568 / P 25).